Here is a 286-residue protein sequence, read N- to C-terminus: Polyamine aminopropyltransferase (286 aa).

Positions 5 to 242 (DNWFTEVLEE…GWWSATLASK (238 aa)) constitute a PABS domain. Glutamine 35 serves as a coordination point for S-methyl-5'-thioadenosine. Spermidine-binding residues include histidine 66 and aspartate 90. Residues aspartate 110 and 141 to 142 (DG) contribute to the S-methyl-5'-thioadenosine site. Residue aspartate 160 is the Proton acceptor of the active site. 160 to 163 (DSTD) contacts spermidine.

The protein belongs to the spermidine/spermine synthase family. In terms of assembly, homodimer or homotetramer.

The protein localises to the cytoplasm. It carries out the reaction S-adenosyl 3-(methylsulfanyl)propylamine + putrescine = S-methyl-5'-thioadenosine + spermidine + H(+). Its pathway is amine and polyamine biosynthesis; spermidine biosynthesis; spermidine from putrescine: step 1/1. Its function is as follows. Catalyzes the irreversible transfer of a propylamine group from the amino donor S-adenosylmethioninamine (decarboxy-AdoMet) to putrescine (1,4-diaminobutane) to yield spermidine. The polypeptide is Polyamine aminopropyltransferase (Alkalilimnicola ehrlichii (strain ATCC BAA-1101 / DSM 17681 / MLHE-1)).